The primary structure comprises 365 residues: 3-isopropylmalate dehydrogenase (365 aa).

An NAD(+)-binding site is contributed by 80 to 91 (GPKWGTGAVRPE). 4 residues coordinate substrate: Arg98, Arg108, Arg137, and Asp226. Residues Asp226, Asp251, and Asp255 each coordinate Mg(2+). NAD(+) is bound at residue 290–301 (GSAPDLPKGKVN).

This sequence belongs to the isocitrate and isopropylmalate dehydrogenases family. As to quaternary structure, homodimer. Mg(2+) serves as cofactor. Requires Mn(2+) as cofactor.

The protein resides in the cytoplasm. The enzyme catalyses (2R,3S)-3-isopropylmalate + NAD(+) = 4-methyl-2-oxopentanoate + CO2 + NADH. The protein operates within amino-acid biosynthesis; L-leucine biosynthesis; L-leucine from 3-methyl-2-oxobutanoate: step 3/4. Catalyzes the oxidation of 3-carboxy-2-hydroxy-4-methylpentanoate (3-isopropylmalate) to 3-carboxy-4-methyl-2-oxopentanoate. The product decarboxylates to 4-methyl-2 oxopentanoate. This is 3-isopropylmalate dehydrogenase (LEU2) from Candida glabrata (strain ATCC 2001 / BCRC 20586 / JCM 3761 / NBRC 0622 / NRRL Y-65 / CBS 138) (Yeast).